Reading from the N-terminus, the 147-residue chain is D-aminoacyl-tRNA deacylase (147 aa).

The Gly-cisPro motif, important for rejection of L-amino acids motif lies at 136 to 137; the sequence is GP.

The protein belongs to the DTD family. As to quaternary structure, homodimer.

Its subcellular location is the cytoplasm. The catalysed reaction is glycyl-tRNA(Ala) + H2O = tRNA(Ala) + glycine + H(+). It carries out the reaction a D-aminoacyl-tRNA + H2O = a tRNA + a D-alpha-amino acid + H(+). Its function is as follows. An aminoacyl-tRNA editing enzyme that deacylates mischarged D-aminoacyl-tRNAs. Also deacylates mischarged glycyl-tRNA(Ala), protecting cells against glycine mischarging by AlaRS. Acts via tRNA-based rather than protein-based catalysis; rejects L-amino acids rather than detecting D-amino acids in the active site. By recycling D-aminoacyl-tRNA to D-amino acids and free tRNA molecules, this enzyme counteracts the toxicity associated with the formation of D-aminoacyl-tRNA entities in vivo and helps enforce protein L-homochirality. This chain is D-aminoacyl-tRNA deacylase, found in Streptococcus pneumoniae (strain P1031).